Here is a 275-residue protein sequence, read N- to C-terminus: Acetyl-coenzyme A carboxylase carboxyl transferase subunit beta (275 aa).

A CoA carboxyltransferase N-terminal domain is found at 21–275 (GLWIKCQCGA…IKIIGMHQAG (255 aa)). Residues Cys-26, Cys-28, Cys-44, and Cys-47 each contribute to the Zn(2+) site. The C4-type zinc finger occupies 26–47 (CQCGAILFAKDLERNLKVCQKC).

This sequence belongs to the AccD/PCCB family. As to quaternary structure, acetyl-CoA carboxylase is a heterohexamer composed of biotin carboxyl carrier protein (AccB), biotin carboxylase (AccC) and two subunits each of ACCase subunit alpha (AccA) and ACCase subunit beta (AccD). It depends on Zn(2+) as a cofactor.

Its subcellular location is the cytoplasm. It catalyses the reaction N(6)-carboxybiotinyl-L-lysyl-[protein] + acetyl-CoA = N(6)-biotinyl-L-lysyl-[protein] + malonyl-CoA. Its pathway is lipid metabolism; malonyl-CoA biosynthesis; malonyl-CoA from acetyl-CoA: step 1/1. Its function is as follows. Component of the acetyl coenzyme A carboxylase (ACC) complex. Biotin carboxylase (BC) catalyzes the carboxylation of biotin on its carrier protein (BCCP) and then the CO(2) group is transferred by the transcarboxylase to acetyl-CoA to form malonyl-CoA. The protein is Acetyl-coenzyme A carboxylase carboxyl transferase subunit beta of Desulforudis audaxviator (strain MP104C).